A 21-amino-acid chain; its full sequence is Bibrotoxin (21 aa).

Intrachain disulfides connect C1–C15 and C3–C11.

The protein belongs to the endothelin/sarafotoxin family. In terms of tissue distribution, expressed by the venom gland.

The protein resides in the secreted. Its function is as follows. Vasoconstrictor activity. These toxins cause cardiac arrest probably as a result of coronary vasospasm. May act by displaying agonistic activities towards endothelin-1 and -2 receptors (EDNRA and EDNRB). The protein is Bibrotoxin of Atractaspis bibronii (Bibron's mole viper).